The following is a 620-amino-acid chain: 1-deoxy-D-xylulose-5-phosphate synthase (620 aa).

Residues His80 and 121–123 each bind thiamine diphosphate; that span reads GHS. Residue Asp152 participates in Mg(2+) binding. Thiamine diphosphate contacts are provided by residues 153–154, Asn181, Tyr288, and Glu370; that span reads GA. Residue Asn181 coordinates Mg(2+).

It belongs to the transketolase family. DXPS subfamily. As to quaternary structure, homodimer. It depends on Mg(2+) as a cofactor. Thiamine diphosphate serves as cofactor.

The enzyme catalyses D-glyceraldehyde 3-phosphate + pyruvate + H(+) = 1-deoxy-D-xylulose 5-phosphate + CO2. The protein operates within metabolic intermediate biosynthesis; 1-deoxy-D-xylulose 5-phosphate biosynthesis; 1-deoxy-D-xylulose 5-phosphate from D-glyceraldehyde 3-phosphate and pyruvate: step 1/1. In terms of biological role, catalyzes the acyloin condensation reaction between C atoms 2 and 3 of pyruvate and glyceraldehyde 3-phosphate to yield 1-deoxy-D-xylulose-5-phosphate (DXP). This Escherichia fergusonii (strain ATCC 35469 / DSM 13698 / CCUG 18766 / IAM 14443 / JCM 21226 / LMG 7866 / NBRC 102419 / NCTC 12128 / CDC 0568-73) protein is 1-deoxy-D-xylulose-5-phosphate synthase.